We begin with the raw amino-acid sequence, 346 residues long: Sulfate/thiosulfate import ATP-binding protein CysA (346 aa).

An ABC transporter domain is found at 3–237 (VRVANVRKEF…PNSPFVYGFI (235 aa)). An ATP-binding site is contributed by 35–42 (GPSGSGKT).

Belongs to the ABC transporter superfamily. Sulfate/tungstate importer (TC 3.A.1.6) family. In terms of assembly, the complex is composed of two ATP-binding proteins (CysA), two transmembrane proteins (CysT and CysW) and a solute-binding protein (CysP).

The protein resides in the cell inner membrane. The enzyme catalyses sulfate(out) + ATP + H2O = sulfate(in) + ADP + phosphate + H(+). It carries out the reaction thiosulfate(out) + ATP + H2O = thiosulfate(in) + ADP + phosphate + H(+). Its function is as follows. Part of the ABC transporter complex CysAWTP involved in sulfate/thiosulfate import. Responsible for energy coupling to the transport system. This chain is Sulfate/thiosulfate import ATP-binding protein CysA, found in Mesorhizobium japonicum (strain LMG 29417 / CECT 9101 / MAFF 303099) (Mesorhizobium loti (strain MAFF 303099)).